The chain runs to 60 residues: Large ribosomal subunit protein bL32 (60 aa).

A compositionally biased stretch (basic residues) spans 1–20; that stretch reads MAVQKSRKSRSRRDMRRSHH. The interval 1 to 60 is disordered; it reads MAVQKSRKSRSRRDMRRSHHHMEVAELSIDATTGEKHRRHHMTKDGFYRGRQLFKASQED.

The protein belongs to the bacterial ribosomal protein bL32 family.

The protein is Large ribosomal subunit protein bL32 of Psychrobacter sp. (strain PRwf-1).